Reading from the N-terminus, the 103-residue chain is Large ribosomal subunit protein uL24 (103 aa).

This sequence belongs to the universal ribosomal protein uL24 family. In terms of assembly, part of the 50S ribosomal subunit.

One of two assembly initiator proteins, it binds directly to the 5'-end of the 23S rRNA, where it nucleates assembly of the 50S subunit. In terms of biological role, one of the proteins that surrounds the polypeptide exit tunnel on the outside of the subunit. In Haemophilus influenzae (strain 86-028NP), this protein is Large ribosomal subunit protein uL24.